Consider the following 259-residue polypeptide: DNA-directed RNA polymerase 30 kDa polypeptide (259 aa).

A TFIIS-type zinc finger spans residues 155–195 (YNTPCPNCKSRNTTPMMIQTRAADEPPLVRHACRDCKQHFK). Zn(2+)-binding residues include Cys159, Cys162, Cys187, and Cys190. Positions 220 to 259 (EILPDNNPSPPESPEPASPIDDGLIRVTFDRNDEPPEDDE) are disordered. Over residues 226 to 236 (NPSPPESPEPA) the composition is skewed to pro residues.

Belongs to the poxviridae DNA-directed RNA polymerase 30 kDa subunit family. As to quaternary structure, the DNA-dependent RNA polymerase (vRNAP) consists of eight subunits encoded by early viral genes and termed according to their apparent molecular masses Rpo147, Rpo132, Rpo35, Rpo30, Rpo22, Rpo19, Rpo18, and Rpo7. The same holoenzyme, with the addition of the transcription-specificity factor RAP94, is used for early gene expression.

It localises to the virion. Its subcellular location is the host cytoplasm. It catalyses the reaction RNA(n) + a ribonucleoside 5'-triphosphate = RNA(n+1) + diphosphate. Functionally, part of the DNA-dependent RNA polymerase which catalyzes the transcription of viral DNA into RNA using the four ribonucleoside triphosphates as substrates. Responsible for the transcription of early, intermediate and late genes. DNA-dependent RNA polymerase associates with the early transcription factor (ETF), itself composed of OPG118 and OPG134, thereby allowing the early genes transcription. Late transcription, and probably also intermediate transcription, require newly synthesized RNA polymerase. This chain is DNA-directed RNA polymerase 30 kDa polypeptide (OPG066), found in Variola virus (isolate Human/India/Ind3/1967) (VARV).